Reading from the N-terminus, the 707-residue chain is Glucose starvation modulator protein 1 (707 aa).

Residues 20–48 (CTFCHQKHLQCSNERPCKNCVKRNIADQC) constitute a DNA-binding region (zn(2)-C6 fungal-type). 4 disordered regions span residues 63 to 122 (NSKA…PNDL), 154 to 188 (QPTH…PPES), 260 to 283 (DQQQ…GPSH), and 385 to 404 (NVSS…SAIA). 2 stretches are compositionally biased toward low complexity: residues 66–79 (AVAA…TTTT) and 91–104 (SPSI…ISPI). 2 stretches are compositionally biased toward polar residues: residues 105 to 114 (NTSTFDTNGH) and 154 to 172 (QPTH…QVQP). Over residues 178–188 (SSVPPSAPPES) the composition is skewed to low complexity. Residues 260 to 274 (DQQQSSSEATGTSAS) show a composition bias toward polar residues. The PAS domain occupies 522 to 591 (DYEKLSQLNS…FQLFKSVAVG (70 aa)). Residues 621 to 652 (NYNNNYNHNYSHNNNNNNNSNNSNNNGMSTGA) are compositionally biased toward low complexity. Positions 621–659 (NYNNNYNHNYSHNNNNNNNSNNSNNNGMSTGAGNSGDGD) are disordered.

The protein belongs to the ERT1/acuK family.

The protein resides in the nucleus. Its function is as follows. Transcription factor which regulates nonfermentable carbon utilization. This Lodderomyces elongisporus (strain ATCC 11503 / CBS 2605 / JCM 1781 / NBRC 1676 / NRRL YB-4239) (Yeast) protein is Glucose starvation modulator protein 1 (GSM1).